The following is a 424-amino-acid chain: Galacturonokinase (424 aa).

The residue at position 2 (Ser2) is an N-acetylserine. ATP is bound at residue 146 to 155; it reads DSSGLSSSAA. Asp197 serves as the catalytic Proton acceptor.

The protein belongs to the GHMP kinase family. Mg(2+) serves as cofactor. It depends on Mn(2+) as a cofactor. The cofactor is Ca(2+). In terms of tissue distribution, expressed in roots, stems, leaves, flowers and young siliques. Higher expression in the elongating middle stem region than in the lower or upper stem region.

The enzyme catalyses D-galacturonate + ATP = 1-phospho-alpha-D-galacturonate + ADP + H(+). Its activity is regulated as follows. Inhibited by EDTA and ADP. Sugar-1-kinase with a strict substrate specificity for the alpha-anomeric configuration of D-galacturonic acid (D-GalA) and ATP. Involved in the biosynthesis of UDP-galacturonic acid (UDP-GalA) from the salvaged GalA that is released during growth-dependent cell wall restructuring. This Arabidopsis thaliana (Mouse-ear cress) protein is Galacturonokinase (GALAK).